A 224-amino-acid chain; its full sequence is 7-cyano-7-deazaguanine synthase (224 aa).

10-20 (LSGGLDSATVV) lines the ATP pocket. Zn(2+) contacts are provided by Cys189, Cys199, Cys202, and Cys205.

It belongs to the QueC family. The cofactor is Zn(2+).

It carries out the reaction 7-carboxy-7-deazaguanine + NH4(+) + ATP = 7-cyano-7-deazaguanine + ADP + phosphate + H2O + H(+). It participates in purine metabolism; 7-cyano-7-deazaguanine biosynthesis. In terms of biological role, catalyzes the ATP-dependent conversion of 7-carboxy-7-deazaguanine (CDG) to 7-cyano-7-deazaguanine (preQ(0)). This chain is 7-cyano-7-deazaguanine synthase, found in Pseudomonas fluorescens (strain SBW25).